The primary structure comprises 455 residues: tRNA modification GTPase MnmE (455 aa).

(6S)-5-formyl-5,6,7,8-tetrahydrofolate is bound by residues arginine 23, glutamate 85, and arginine 124. Positions 220 to 375 (GVSVVIAGKP…LQDAIFEAFI (156 aa)) constitute a TrmE-type G domain. Position 230 (asparagine 230) interacts with K(+). Residues 230–235 (NVGKSS), 249–255 (TSVPGTT), and 274–277 (DTAG) each bind GTP. Position 234 (serine 234) interacts with Mg(2+). K(+) is bound by residues threonine 249, valine 251, and threonine 254. Threonine 255 is a Mg(2+) binding site. Lysine 455 is a (6S)-5-formyl-5,6,7,8-tetrahydrofolate binding site.

The protein belongs to the TRAFAC class TrmE-Era-EngA-EngB-Septin-like GTPase superfamily. TrmE GTPase family. Homodimer. Heterotetramer of two MnmE and two MnmG subunits. K(+) serves as cofactor.

The protein localises to the cytoplasm. Its function is as follows. Exhibits a very high intrinsic GTPase hydrolysis rate. Involved in the addition of a carboxymethylaminomethyl (cmnm) group at the wobble position (U34) of certain tRNAs, forming tRNA-cmnm(5)s(2)U34. The polypeptide is tRNA modification GTPase MnmE (Geotalea uraniireducens (strain Rf4) (Geobacter uraniireducens)).